The chain runs to 487 residues: Aspartyl/glutamyl-tRNA(Asn/Gln) amidotransferase subunit B (487 aa).

This sequence belongs to the GatB/GatE family. GatB subfamily. Heterotrimer of A, B and C subunits.

The enzyme catalyses L-glutamyl-tRNA(Gln) + L-glutamine + ATP + H2O = L-glutaminyl-tRNA(Gln) + L-glutamate + ADP + phosphate + H(+). The catalysed reaction is L-aspartyl-tRNA(Asn) + L-glutamine + ATP + H2O = L-asparaginyl-tRNA(Asn) + L-glutamate + ADP + phosphate + 2 H(+). In terms of biological role, allows the formation of correctly charged Asn-tRNA(Asn) or Gln-tRNA(Gln) through the transamidation of misacylated Asp-tRNA(Asn) or Glu-tRNA(Gln) in organisms which lack either or both of asparaginyl-tRNA or glutaminyl-tRNA synthetases. The reaction takes place in the presence of glutamine and ATP through an activated phospho-Asp-tRNA(Asn) or phospho-Glu-tRNA(Gln). The chain is Aspartyl/glutamyl-tRNA(Asn/Gln) amidotransferase subunit B from Leptospira biflexa serovar Patoc (strain Patoc 1 / Ames).